A 100-amino-acid polypeptide reads, in one-letter code: UPF0125 protein CV_3462 (100 aa).

The protein belongs to the UPF0125 (RnfH) family.

This is UPF0125 protein CV_3462 from Chromobacterium violaceum (strain ATCC 12472 / DSM 30191 / JCM 1249 / CCUG 213 / NBRC 12614 / NCIMB 9131 / NCTC 9757 / MK).